Reading from the N-terminus, the 585-residue chain is ATP-dependent RNA helicase DBP3 (585 aa).

The interval 1 to 124 (MTTSATEKAL…SSSASAASFT (124 aa)) is disordered. Low complexity predominate over residues 26–43 (AKAAAAAGASASTSLEGS). Composition is skewed to basic residues over residues 52 to 64 (KDKK…KDKK) and 79 to 93 (AKKR…KKAA). Over residues 94–124 (AKSGAATSLESTPAASPAPAASSSASAASFT) the composition is skewed to low complexity. A Q motif motif is present at residues 159–187 (FRELDGKVDAAVKKTLDSQGFSTPTPIQA). The Helicase ATP-binding domain maps to 190–377 (WPVLLQNKDV…ESFMNGPVRV (188 aa)). An ATP-binding site is contributed by 203–210 (AETGSGKT). The DEAD box motif lies at 322–325 (DEAD). The 149-residue stretch at 406-554 (RLNDFLRSVN…KVPDALTKFP (149 aa)) folds into the Helicase C-terminal domain.

It belongs to the DEAD box helicase family. DDX5/DBP2 subfamily.

It localises to the nucleus. The protein localises to the nucleolus. The enzyme catalyses ATP + H2O = ADP + phosphate + H(+). Functionally, ATP-dependent RNA helicase required for 60S ribosomal subunit synthesis. Involved in efficient pre-rRNA processing, predominantly at site A3, which is necessary for the normal formation of 25S and 5.8S rRNAs. The protein is ATP-dependent RNA helicase DBP3 (DBP3) of Mycosarcoma maydis (Corn smut fungus).